Reading from the N-terminus, the 502-residue chain is MGSLDSNYDTESPASVGQFNPLDPEEFRKQAHCIVDFIADYYKNIESYPVLSQVDPGYRHSRLGKNAPYRSEPFESILKDVQKDIIPGMTHWMSPNFFAHFPATVSSAAFVGEMLCTCFNSVGFNWLASPAATELEMVVIDWLANMLKLPKSFMFSGTGGGVLQGTTSEAILCTLIAASPMHFEIVGVKTSTSFVVYGSDQTHSTYAKACKLAGILPCNIRSIPTTADSNFSVSPLLLRRAIEADKAAGMVPLYICATVGTTSTTAIDPLSSLADVANDYGVWFHVDAAYAGSACICPEFRHYLDGIERADSLSLSPHKWLLSYLDCCCLWVKSPSLLVKALSTDPEYLKNQPSESKSVVDYKDWQVGTGRRFKALRLWFVMRSYGVANLQSHIRTDVQMAKMFEGFVKSDPRFEILVPRVFSLVCFRLNPISGSDPTGTEALNRKLLDWVNSTGRVYMTHTKVGGIYMLRFAVGATLTEKRHVSSAWKLIKEGADVLLKED.

Over residues 1–18 (MGSLDSNYDTESPASVGQ) the composition is skewed to polar residues. Positions 1–21 (MGSLDSNYDTESPASVGQFNP) are disordered. Lys-319 bears the N6-(pyridoxal phosphate)lysine mark.

It belongs to the group II decarboxylase family. Pyridoxal 5'-phosphate serves as cofactor. In terms of tissue distribution, highly expressed in apex. Expressed in young stem and bark tissues. Expressed at low levels in leaves, fruits and seeds.

The enzyme catalyses L-tryptophan + H(+) = tryptamine + CO2. Functionally, involved in the biosynthesis of tryptamine. Supplies tryptamine for the indole moiety of camptothecin (CPT), an anti-cancer monoterpene alkaloid. Represents a key step in monoterpene indole alkaloid biosynthesis. Is specific for tryptophan, and inactive against tyrosine, phenylalanine and 3,4-dihydroxyphenylalanine (dopa). The protein is Tryptophan decarboxylase TDC1 of Camptotheca acuminata (Happy tree).